The sequence spans 222 residues: MDGTDAEAPGQTAPSRAESLVAHAEASISEDALLAAARERAVDIGAGAVTPAVGALLSLLTKLSGGKAIAEVGTGAGVSGLWLLSGMSDDGVLTTIDIEPEYLRLAKQAFAEAGIGPSRTRLIGGRAQEVLTRLADEYYDLVFIDADPIDQPDYVVEGVRLLRPGGVIVVHRAALGGRAGDPAARDAEVVAVREAARLIAEDERLTPALVPLGDGILAAVRD.

S-adenosyl-L-methionine contacts are provided by residues Val49, Glu71, 73-74, Ser79, Asp97, and Ile98; that span reads GT. Asp145 serves as a coordination point for substrate. Residue Asp147 coordinates S-adenosyl-L-methionine.

Belongs to the class I-like SAM-binding methyltransferase superfamily. Cation-dependent O-methyltransferase family.

The polypeptide is Putative O-methyltransferase MAP_2558 (Mycolicibacterium paratuberculosis (strain ATCC BAA-968 / K-10) (Mycobacterium paratuberculosis)).